The chain runs to 132 residues: MSMNDPLSDMIARIKNAAQRKRSKVSTPASKLRARVLDVLADEGYIRGYSLVEKPGAFPEFEIELKYFDGEPVIAEISRVSKPGRRVYSSIKDLKPIKNGLGISILSTPKGVMSDTAARDANVGGEVLCRVY.

Belongs to the universal ribosomal protein uS8 family. In terms of assembly, part of the 30S ribosomal subunit. Contacts proteins S5 and S12.

Functionally, one of the primary rRNA binding proteins, it binds directly to 16S rRNA central domain where it helps coordinate assembly of the platform of the 30S subunit. The chain is Small ribosomal subunit protein uS8 from Caulobacter vibrioides (strain ATCC 19089 / CIP 103742 / CB 15) (Caulobacter crescentus).